The following is an 82-amino-acid chain: Large ribosomal subunit protein bL27 (82 aa).

Positions 1–21 are disordered; it reads MAHKKGASSSRNGRDSNAKRL.

This sequence belongs to the bacterial ribosomal protein bL27 family.

This Tropheryma whipplei (strain TW08/27) (Whipple's bacillus) protein is Large ribosomal subunit protein bL27.